A 234-amino-acid polypeptide reads, in one-letter code: Large ribosomal subunit protein uL3 (234 aa).

The tract at residues 137–156 is disordered; the sequence is AGHGVERKHRSPGSVGGCAT.

This sequence belongs to the universal ribosomal protein uL3 family. In terms of assembly, part of the 50S ribosomal subunit. Forms a cluster with proteins L14 and L19.

In terms of biological role, one of the primary rRNA binding proteins, it binds directly near the 3'-end of the 23S rRNA, where it nucleates assembly of the 50S subunit. The polypeptide is Large ribosomal subunit protein uL3 (Frankia alni (strain DSM 45986 / CECT 9034 / ACN14a)).